We begin with the raw amino-acid sequence, 201 residues long: Adenylyl-sulfate kinase (201 aa).

35-42 (GLSGSGKS) serves as a coordination point for ATP. Residue Ser109 is the Phosphoserine intermediate of the active site.

This sequence belongs to the APS kinase family.

It catalyses the reaction adenosine 5'-phosphosulfate + ATP = 3'-phosphoadenylyl sulfate + ADP + H(+). The protein operates within sulfur metabolism; hydrogen sulfide biosynthesis; sulfite from sulfate: step 2/3. Its function is as follows. Catalyzes the synthesis of activated sulfate. This Salmonella typhi protein is Adenylyl-sulfate kinase.